The following is a 1756-amino-acid chain: Protein TIC 214 (1756 aa).

The next 6 membrane-spanning stretches (helical) occupy residues 18 to 38 (VSGPIIIFGLYYGFLATLPFG), 54 to 74 (GYGIIAISGSITGQLIGFLSM), 79 to 99 (IYAALWKPYAITLLVVPYMFF), 128 to 148 (LFMDGLILQLLNPILLANPVL), 163 to 183 (ISFMISGLCGWLGGHILLTIF), and 210 to 230 (FSLLILCYCSFYLGRAPLPFL). The interval 1469–1504 (KNKQVEDGQDKNGQVEDQDGQDQDGQVEDQQTDGKK) is disordered. Over residues 1471–1482 (KQVEDGQDKNGQ) the composition is skewed to basic and acidic residues. A compositionally biased stretch (acidic residues) spans 1484-1499 (EDQDGQDQDGQVEDQQ).

This sequence belongs to the TIC214 family. As to quaternary structure, part of the Tic complex.

It is found in the plastid. Its subcellular location is the chloroplast inner membrane. Involved in protein precursor import into chloroplasts. May be part of an intermediate translocation complex acting as a protein-conducting channel at the inner envelope. The sequence is that of Protein TIC 214 from Pinus thunbergii (Japanese black pine).